Here is a 462-residue protein sequence, read N- to C-terminus: Sensor histidine kinase RegB (462 aa).

The Cytoplasmic segment spans residues 1–25 (MILGPDGILNRDTRGDWVRLRTLIL). Residues 26-45 (LRWMAVAGQLAAIVVTDWYL) traverse the membrane as a helical segment. The Extracellular segment spans residues 46 to 51 (GVRLPM). Residues 52–70 (GLCFMAVGASVIANVIATF) traverse the membrane as a helical segment. Topologically, residues 71-78 (VFPQNRRL) are cytoplasmic. A helical membrane pass occupies residues 79–96 (TEFQALMILLFDLTQLSF). The Extracellular portion of the chain corresponds to 97–103 (LLFLTGG). The helical transmembrane segment at 104-123 (LTNPFALLILAPVTISALAL) threads the bilayer. The Cytoplasmic segment spans residues 124 to 129 (ELRTTV). The chain crosses the membrane as a helical span at residues 130–149 (ILGAIAIGLLTFTAYFHLPL). Residues 150 to 164 (ILADGSSLSVPRMFE) lie on the Extracellular side of the membrane. Residues 165-182 (FGFWLAIVIGILFLGLYS) form a helical membrane-spanning segment. Topologically, residues 183–462 (RRVAIEIRSM…PLGENVLIQT (280 aa)) are cytoplasmic. Positions 218–445 (AAAHELGTPL…IVEVIWPVDR (228 aa)) constitute a Histidine kinase domain. The residue at position 221 (His-221) is a Phosphohistidine; by autocatalysis.

It localises to the cell inner membrane. It carries out the reaction ATP + protein L-histidine = ADP + protein N-phospho-L-histidine.. Its function is as follows. Member of the two-component regulatory system RegB/RegA. Involved in the positive regulation of photosynthesis gene expression in response to anaerobiosis. Also involved in positive regulation of the cbbI and cbbII Calvin cycle CO2 fixation operons, as well as in regulation of expression of genes involved in alternative CO2 fixation pathways. Phosphorylates RegA/PrrA. In Cereibacter sphaeroides (strain ATCC 17023 / DSM 158 / JCM 6121 / CCUG 31486 / LMG 2827 / NBRC 12203 / NCIMB 8253 / ATH 2.4.1.) (Rhodobacter sphaeroides), this protein is Sensor histidine kinase RegB (regB).